We begin with the raw amino-acid sequence, 1141 residues long: PR domain zinc finger protein 15 (1141 aa).

In terms of domain architecture, SET spans 49–159 (PNLEIRRLED…PGTELRVWYA (111 aa)). The C2H2-type 1 zinc finger occupies 197-219 (WACKVCSATFLELQLLNEHLLGH). The disordered stretch occupies residues 224–283 (KSLPPGSQSEAAAPEKEQDTPRGEPPAVPESENVATKEQKKKPRRGRKPKVSKAEQPLVI). Residues 236 to 245 (APEKEQDTPR) show a composition bias toward basic and acidic residues. Residues 262 to 274 (QKKKPRRGRKPKV) show a composition bias toward basic residues. 4 consecutive C2H2-type zinc fingers follow at residues 372–394 (YQCN…VRSH), 399–422 (FKCE…SYKH), 460–482 (FQCE…KKKH), and 487–509 (FACE…QRRH). Lys-517 is covalently cross-linked (Glycyl lysine isopeptide (Lys-Gly) (interchain with G-Cter in SUMO2)). C2H2-type zinc fingers lie at residues 536–558 (SGCP…LLTH) and 563–585 (YTCE…IHVH). The segment at 604 to 623 (IGISSEENDDNSDESADSEP) is disordered. Residues 609-620 (EENDDNSDESAD) show a composition bias toward acidic residues. 9 C2H2-type zinc fingers span residues 626–649 (YSCK…MEVH), 654–676 (YGCS…MVIH), 690–712 (HPCE…KLIH), 718–740 (HACE…MRVH), 746–768 (YLCA…MKLH), 774–796 (YECK…CKRH), 802–824 (FMCE…KLIH), 830–853 (WTCS…QLTH), and 859–882 (QSCQ…RRKH). Disordered regions lie at residues 922-973 (AEGK…DETN) and 1108-1141 (QTDV…MYSY). The segment covering 927 to 938 (GKAAKRSHKRKQ) has biased composition (basic residues). Residues 1121 to 1141 (PQQAAQPQVQAEQQQQQMYSY) are compositionally biased toward low complexity.

This sequence belongs to the class V-like SAM-binding methyltransferase superfamily. In terms of tissue distribution, detected in all tissues examined.

It is found in the nucleus. Functionally, sequence-specific DNA-binding transcriptional regulator. Plays a role as a molecular node in a transcriptional network regulating embryonic development and cell fate decision. Stimulates the expression of upstream key transcriptional activators and repressors of the Wnt/beta-catenin and MAPK/ERK pathways, respectively, that are essential for naive pluripotency and self-renewal maintenance of embryonic stem cells (ESCs). Specifically promotes SPRY1 and RSPO1 transcription activation through recognition and direct binding of a specific DNA sequence in their promoter regions. Involved in early embryo development. Also plays a role in induced pluripotent stem cells (iPSCs) reprogramming. This Homo sapiens (Human) protein is PR domain zinc finger protein 15.